The following is a 137-amino-acid chain: Bombinin-like peptides 1 (137 aa).

A signal peptide spans 1–18; sequence MNFKYIVAVSILIASAYA. N70 carries the asparagine amide modification. Positions 91 to 112 are disordered; the sequence is LDSFEHPEEASEKETRGFNQEE. I118 carries the D-allo-isoleucine modification. I136 is modified (isoleucine amide).

Belongs to the bombinin family. As to expression, expressed by the skin glands.

The protein resides in the secreted. Has antimicrobial activity, but no hemolytic activity. Preliminary evidence indicates that this peptide does not lyse and thus kill the bacteria by its antimicrobial activity. Functionally, bombinin H has antibacterial and hemolytic activity. In Bombina variegata (Yellow-bellied toad), this protein is Bombinin-like peptides 1.